The chain runs to 332 residues: Glycerol-3-phosphate dehydrogenase [NAD(P)+] (332 aa).

The NADPH site is built by Ser15, Trp16, and Lys110. Positions 110, 137, and 139 each coordinate sn-glycerol 3-phosphate. Ala141 provides a ligand contact to NADPH. The sn-glycerol 3-phosphate site is built by Lys192, Asp245, Ser255, Arg256, and Asn257. The active-site Proton acceptor is the Lys192. Arg256 contacts NADPH. Glu282 contacts NADPH.

It belongs to the NAD-dependent glycerol-3-phosphate dehydrogenase family.

The protein resides in the cytoplasm. The catalysed reaction is sn-glycerol 3-phosphate + NAD(+) = dihydroxyacetone phosphate + NADH + H(+). It carries out the reaction sn-glycerol 3-phosphate + NADP(+) = dihydroxyacetone phosphate + NADPH + H(+). The protein operates within membrane lipid metabolism; glycerophospholipid metabolism. In terms of biological role, catalyzes the reduction of the glycolytic intermediate dihydroxyacetone phosphate (DHAP) to sn-glycerol 3-phosphate (G3P), the key precursor for phospholipid synthesis. The protein is Glycerol-3-phosphate dehydrogenase [NAD(P)+] of Coxiella burnetii (strain CbuK_Q154) (Coxiella burnetii (strain Q154)).